Consider the following 447-residue polypeptide: MSPLECSECFGDQLMHRTYTWHLTLHSRPNFTRKREIRSESLEIPINVILPQRGTEPFLRLHNLYTTPRCSRQAAMPRISRRVASQHSYPLNRFSSMPFDPMERPTSQADLELDYNPPRVQLSDEMFVFQDGRWVNESCRLQSPYFSPSSSFHHKLHHKRMAKEYLLQEENKSLRDENRALRDENKALRKENKILQVFWEEHKVTLGHEESQTSSPLLHKDTTSQEVVKKDNATLPAQRSKENTLQFIREENRALQQLLEQRQAYWAQAEESATSAEEGKPTSSPKEEPHNSGLLPDQSTSHSSHFEEPKASPTTQEDSKTLRALREMVTNLSGPSGEEEGKAGPNLTDSAQPLQLLREMNQALQALREENRLLQEENRALHAMREEHRVFQEENKALWENNKLKLQQRLVIDTVTEVTARMEMLIEELYAFMPAKNNKDPKKPSRV.

S41, S85, S88, S96, S123, S143, S147, and S149 each carry phosphoserine. Positions 164-197 (EYLLQEENKSLRDENRALRDENKALRKENKILQV) form a coiled coil. 2 disordered regions span residues 208 to 244 (HEESQTSSPLLHKDTTSQEVVKKDNATLPAQRSKENT) and 266 to 320 (WAQA…EDSK). 2 positions are modified to phosphoserine: S211 and S224. Residues 218–232 (LHKDTTSQEVVKKDN) are compositionally biased toward basic and acidic residues. The stretch at 237-264 (AQRSKENTLQFIREENRALQQLLEQRQA) forms a coiled coil. Residues 266 to 276 (WAQAEESATSA) show a composition bias toward low complexity. Residues S272 and S275 each carry the phosphoserine modification. Over residues 277 to 290 (EEGKPTSSPKEEPH) the composition is skewed to basic and acidic residues. Phosphoserine is present on residues S333 and S336. A coiled-coil region spans residues 354–412 (LQLLREMNQALQALREENRLLQEENRALHAMREEHRVFQEENKALWENNKLKLQQRLVI).

This sequence belongs to the chibby family. SPERT subfamily. Homodimer. Binds to NEK1.

The protein is Protein chibby homolog 2 (Cby2) of Rattus norvegicus (Rat).